The chain runs to 562 residues: Glucan 1,3-beta-glucosidase 2 (562 aa).

The first 22 residues, 1-22 (MPLKSFFFSAFLVLCLSKFTQG), serve as a signal peptide directing secretion. Residues Asn-50, Asn-77, Asn-86, Asn-90, Asn-106, Asn-157, and Asn-220 are each glycosylated (N-linked (GlcNAc...) asparagine). The active-site Proton donor is Glu-254. Residues Asn-281, Asn-285, Asn-310, Asn-317, and Asn-322 are each glycosylated (N-linked (GlcNAc...) asparagine). His-334 acts as the Nucleophile in catalysis. N-linked (GlcNAc...) asparagine glycans are attached at residues Asn-401, Asn-480, and Asn-539.

Belongs to the glycosyl hydrolase 5 (cellulase A) family.

It localises to the cell membrane. The catalysed reaction is Successive hydrolysis of beta-D-glucose units from the non-reducing ends of (1-&gt;3)-beta-D-glucans, releasing alpha-glucose.. The chain is Glucan 1,3-beta-glucosidase 2 (EXG2) from Saccharomyces cerevisiae (strain ATCC 204508 / S288c) (Baker's yeast).